A 114-amino-acid chain; its full sequence is Putative pterin-4-alpha-carbinolamine dehydratase (114 aa).

Belongs to the pterin-4-alpha-carbinolamine dehydratase family.

It catalyses the reaction (4aS,6R)-4a-hydroxy-L-erythro-5,6,7,8-tetrahydrobiopterin = (6R)-L-erythro-6,7-dihydrobiopterin + H2O. The protein is Putative pterin-4-alpha-carbinolamine dehydratase of Pseudoalteromonas translucida (strain TAC 125).